We begin with the raw amino-acid sequence, 916 residues long: Dual serine/threonine and tyrosine protein kinase (916 aa).

Positions 1–19 are enriched in basic and acidic residues; sequence MQRDGTRSARRMDEGDRRT. The interval 1-27 is disordered; the sequence is MQRDGTRSARRMDEGDRRTGSAGRSGS. The Protein kinase domain maps to 641-895; sequence PRIGRELGRG…PLMGIVQPML (255 aa). Residues 647-655 and lysine 670 each bind ATP; that span reads LGRGQYGVV. The Proton acceptor role is filled by aspartate 766.

Belongs to the protein kinase superfamily. Ser/Thr protein kinase family.

It localises to the cytoplasm. The protein resides in the cell membrane. The protein localises to the apical cell membrane. Its subcellular location is the basolateral cell membrane. It is found in the cell junction. The enzyme catalyses L-seryl-[protein] + ATP = O-phospho-L-seryl-[protein] + ADP + H(+). The catalysed reaction is L-threonyl-[protein] + ATP = O-phospho-L-threonyl-[protein] + ADP + H(+). It catalyses the reaction L-tyrosyl-[protein] + ATP = O-phospho-L-tyrosyl-[protein] + ADP + H(+). In terms of biological role, may act as a positive regulator of ERK phosphorylation downstream of fibroblast growth factor-receptor activation. May induce both caspase-dependent apoptosis and caspase-independent cell death. May play a role in the embryonic development. The chain is Dual serine/threonine and tyrosine protein kinase (dstyk) from Xenopus laevis (African clawed frog).